A 105-amino-acid chain; its full sequence is uncharacterized protein (105 aa).

Residue serine 2 is modified to N-acetylserine.

This is an uncharacterized protein from Saccharomyces cerevisiae (strain ATCC 204508 / S288c) (Baker's yeast).